The following is a 314-amino-acid chain: Probable cell division protein WhiA (314 aa).

The segment at residues S282–E314 is a DNA-binding region (H-T-H motif).

The protein belongs to the WhiA family.

Involved in cell division and chromosome segregation. The protein is Probable cell division protein WhiA of Symbiobacterium thermophilum (strain DSM 24528 / JCM 14929 / IAM 14863 / T).